Here is a 130-residue protein sequence, read N- to C-terminus: DNA-directed RNA polymerase subunit omega (130 aa).

The tract at residues 109 to 130 (EEELLKGLEGLAPPEEQPEEDE) is disordered.

The protein belongs to the RNA polymerase subunit omega family. As to quaternary structure, the RNAP catalytic core consists of 2 alpha, 1 beta, 1 beta' and 1 omega subunit. When a sigma factor is associated with the core the holoenzyme is formed, which can initiate transcription.

The catalysed reaction is RNA(n) + a ribonucleoside 5'-triphosphate = RNA(n+1) + diphosphate. Functionally, promotes RNA polymerase assembly. Latches the N- and C-terminal regions of the beta' subunit thereby facilitating its interaction with the beta and alpha subunits. The protein is DNA-directed RNA polymerase subunit omega of Rhodopseudomonas palustris (strain BisA53).